Here is a 428-residue protein sequence, read N- to C-terminus: Immunoglobulin superfamily containing leucine-rich repeat protein (428 aa).

Residues 1–18 form the signal peptide; the sequence is MQELRLLCLVVLVGLAQA. In terms of domain architecture, LRRNT spans 19-50; that stretch reads CPEPCECGEKYGFHIADCAYRDLQAVPSGFPA. N51 carries an N-linked (GlcNAc...) asparagine glycan. LRR repeat units follow at residues 51 to 72, 75 to 96, 99 to 122, 123 to 144, and 147 to 168; these read NVTTLSLSANQLPSLPGGAFRE, RLQSLWLAHNEIRSVAAGALAS, QLKSLDLSHNLISDFAWSDLHSLS, ALQLLKMDSNELTFIPRDAFRS, and ALRSLQLNHNRLHTLAEGTFAP. The 52-residue stretch at 180–231 folds into the LRRCT domain; it reads NPFDCTCGIVWFKTWALTTAVSIPEQDNITCTSPHVLKGTRLNRLLPLPCSA. Residues 232-343 form the Ig-like domain; the sequence is PSVQLTYQPS…GSAESSVNVA (112 aa). A disulfide bridge connects residues C257 and C327. N309 carries N-linked (GlcNAc...) asparagine glycosylation.

Its subcellular location is the secreted. This chain is Immunoglobulin superfamily containing leucine-rich repeat protein (ISLR), found in Bos taurus (Bovine).